We begin with the raw amino-acid sequence, 1215 residues long: Zinc finger SWIM domain-containing protein 6 (1215 aa).

2 disordered regions span residues 1-46 (MAER…RPGP) and 133-161 (AAGGPGDDSGGGGGAGGGGGGGSSSSPAA). 2 stretches are compositionally biased toward gly residues: residues 18-38 (PGGGGGGGGSSGGGGGAGGGY) and 133-155 (AAGGPGDDSGGGGGAGGGGGGGS). An SWIM-type zinc finger spans residues 246 to 283 (CNVAISFDRCKITSVTCSCGNKDIFYCAHVVALSLYRI).

Involved in nervous system development, important for striatal morphology and motor regulation. This Homo sapiens (Human) protein is Zinc finger SWIM domain-containing protein 6.